Here is a 306-residue protein sequence, read N- to C-terminus: MEQWESRGHLLTEQINPNSLNLDQLNPLELVDLFNREDAQTLKAIAMARQELALGISLTSQALAKGGRLFYIGAGTSGRLGVLDAAECPPTFCTPPELVQGIIAGGAAALVRSSEDLEDKAEDGAAIIAQREIHELDVVVGITAGGTTPYVHGALQAAKQRGATTIAISCVPAEQVEIAVDVDIRLLTGPELLAGSTRLKAGTVTKMALNILSTGTMVMLGKVYGNQMVDVAVTNHKLHDRALRIICHLTDVSREEAAILLEKSGRRVKLALLMQKTGLSAAAGQELLQKHRGQLRAALQAYNQID.

In terms of domain architecture, SIS spans 59–222 (TSQALAKGGR…STGTMVMLGK (164 aa)). The active-site Proton donor is the Glu87. Glu118 is an active-site residue.

This sequence belongs to the GCKR-like family. MurNAc-6-P etherase subfamily. As to quaternary structure, homodimer.

The catalysed reaction is N-acetyl-D-muramate 6-phosphate + H2O = N-acetyl-D-glucosamine 6-phosphate + (R)-lactate. It functions in the pathway amino-sugar metabolism; N-acetylmuramate degradation. Specifically catalyzes the cleavage of the D-lactyl ether substituent of MurNAc 6-phosphate, producing GlcNAc 6-phosphate and D-lactate. This chain is N-acetylmuramic acid 6-phosphate etherase, found in Microcystis aeruginosa (strain NIES-843 / IAM M-2473).